A 697-amino-acid polypeptide reads, in one-letter code: MFS antiporter QDR3 (697 aa).

Residues 1 to 141 (MSHSPNLSPQ…ARDYPNKIKY (141 aa)) lie on the Cytoplasmic side of the membrane. Residues 38–109 (HPIGHHGREQ…KPTSTSIKTN (72 aa)) form a disordered region. 2 stretches are compositionally biased toward low complexity: residues 53 to 69 (NTTK…HTTT) and 85 to 99 (DLSS…YLSQ). A helical transmembrane segment spans residues 142 to 162 (LIVFIIAFASLAGPFGTSVML). Over 163–180 (PAIDDIVNDLNTNVSTVN) the chain is Extracellular. Asn-175 and Asn-180 each carry an N-linked (GlcNAc...) asparagine glycan. The helical transmembrane segment at 181–201 (VSVGIYLLSLGIFPLWWSSFS) threads the bilayer. The Cytoplasmic segment spans residues 202–215 (ERFGRRSVYMVSFT). A helical membrane pass occupies residues 216–236 (LFVAFSIGTALSPNIAALIVL). The Extracellular segment spans residues 237-240 (RVLQ). A helical transmembrane segment spans residues 241 to 261 (GGSSASVQAVGAGTIADLFIP). Topologically, residues 262 to 268 (QERGQAM) are cytoplasmic. The chain crosses the membrane as a helical span at residues 269–289 (GLYYLGPLAGPFLAPILGGAV). Over 290 to 296 (SQAWGWR) the chain is Extracellular. Residues 297–317 (ATQWLLMIISACSFVLITFFL) traverse the membrane as a helical segment. Over 318–485 (PETLRRVDTI…SIILLKHPPV (168 aa)) the chain is Cytoplasmic. The segment at 338 to 367 (DNNGSQNEKIHDDFAGADNSSVHDIDGNPI) is disordered. The chain crosses the membrane as a helical span at residues 486-506 (VLVISFSAISFAAIYFFNMAI). Residues 507-519 (SYEYARSPYNFSS) lie on the Extracellular side of the membrane. The N-linked (GlcNAc...) asparagine glycan is linked to Asn-516. The chain crosses the membrane as a helical span at residues 520-540 (VILGLMYIPNSVTYFMASIIG). The Cytoplasmic segment spans residues 541-565 (GKWNDRLLNRYAQKHGELVPESRLS). The chain crosses the membrane as a helical span at residues 566–586 (WNIVVAIILYPMACLIFGWTI). At 587 to 590 (KYRE) the chain is on the extracellular side. The helical transmembrane segment at 591–611 (FWVIPLIGTALFGFASMLVIG) threads the bilayer. Residues 612-626 (ATVTYLVDSLPGKGA) are Cytoplasmic-facing. The helical transmembrane segment at 627-647 (TGVALNNLIRQILAAIATFIV) threads the bilayer. Over 648–653 (EPLLRA) the chain is Extracellular. Residues 654–674 (IGAGVLFSIIAGILLVSSLVL) form a helical membrane-spanning segment. Over 675-697 (LYLKKRGAFFREHYDVMDLYAKL) the chain is Cytoplasmic.

The protein belongs to the major facilitator superfamily. CAR1 family.

Its subcellular location is the cell membrane. In terms of biological role, MFS antiporter that does not display functional linkage as drug transporter and performs functions that significantly affect biofilm development and virulence. No substrate for transport has been identified yet, but plays an important role in the growth in the host. The chain is MFS antiporter QDR3 (QDR3) from Candida albicans (strain SC5314 / ATCC MYA-2876) (Yeast).